Reading from the N-terminus, the 102-residue chain is Large ribosomal subunit protein bL21 (102 aa).

This sequence belongs to the bacterial ribosomal protein bL21 family. In terms of assembly, part of the 50S ribosomal subunit. Contacts protein L20.

This protein binds to 23S rRNA in the presence of protein L20. This Geotalea daltonii (strain DSM 22248 / JCM 15807 / FRC-32) (Geobacter daltonii) protein is Large ribosomal subunit protein bL21.